The sequence spans 691 residues: Lipase 2 (691 aa).

An N-terminal signal peptide occupies residues 1 to 37 (MLRGQEERKYSIRKYSIGVVSVLAATMFVVSSHEAQA). A compositionally biased stretch (polar residues) spans 34 to 72 (EAQASEKTPTSNAAAQKETLNQPGEQGNAITSHQMQSGK). A disordered region spans residues 34 to 267 (EAQASEKTPT…KPTDKNTDNK (234 aa)). A propeptide spanning residues 38-296 (SEKTPTSNAA…ADAKKVRPLK (259 aa)) is cleaved from the precursor. Positions 73-82 (QLDDMHKENG) are enriched in basic and acidic residues. Composition is skewed to polar residues over residues 83-115 (KSGT…NDNQ), 125-172 (SKQS…QPSI), and 186-207 (PTST…AQDA). Basic and acidic residues-rich tracts occupy residues 226–238 (IDAK…RQSE) and 258–267 (KPTDKNTDNK). Ser-413 (nucleophile) is an active-site residue. Position 580 (Gly-580) interacts with Ca(2+). The active-site Charge relay system is the Asp-604. Ca(2+) is bound at residue Asp-645. Catalysis depends on His-646, which acts as the Charge relay system. Ca(2+) is bound by residues Asp-648, Asp-653, and Asp-656.

The protein belongs to the AB hydrolase superfamily. Lipase family.

It localises to the secreted. It catalyses the reaction a triacylglycerol + H2O = a diacylglycerol + a fatty acid + H(+). This Staphylococcus aureus (strain Mu50 / ATCC 700699) protein is Lipase 2 (lip2).